We begin with the raw amino-acid sequence, 289 residues long: Bidirectional sugar transporter SWEET10 (289 aa).

Residues 1–5 (MAISQ) are Extracellular-facing. A helical transmembrane segment spans residues 6 to 26 (AVLATVFGILGNIISFFVCLA). In terms of domain architecture, MtN3/slv 1 spans 11-96 (VFGILGNIIS…SLFFFYAPKK (86 aa)). Topologically, residues 27-43 (PIPTFVRIYKRKSSEGY) are cytoplasmic. Residues 44-64 (QSIPYVISLFSAMLWMYYAMI) traverse the membrane as a helical segment. Residues 65-70 (KKDAMM) lie on the Extracellular side of the membrane. A helical transmembrane segment spans residues 71–91 (LITINSFAFVVQIVYISLFFF). Topologically, residues 92–103 (YAPKKEKTLTVK) are cytoplasmic. A helical membrane pass occupies residues 104–124 (FVLFVDVLGFGAIFVLTYFII). The Extracellular portion of the chain corresponds to 125–131 (HANKRVQ). The MtN3/slv 2 domain occupies 131 to 214 (QVLGYICMVF…QMILFLIYKK (84 aa)). A helical transmembrane segment spans residues 132 to 152 (VLGYICMVFALSVFVAPLGII). Residues 153–165 (RKVIKTKSAEFMP) are Cytoplasmic-facing. A helical membrane pass occupies residues 166 to 186 (FGLSFFLTLSAVMWFFYGLLL). Residues 187-190 (KDMN) are Extracellular-facing. The helical transmembrane segment at 191–211 (IALPNVLGFIFGVLQMILFLI) threads the bilayer. Residues 212-289 (YKKPGTKVLE…EKEVFLISKN (78 aa)) lie on the Cytoplasmic side of the membrane.

The protein belongs to the SWEET sugar transporter family. In terms of assembly, forms heterooligomers with SWEET8.

The protein localises to the cell membrane. In terms of biological role, mediates both low-affinity uptake and efflux of sugar across the plasma membrane. This Arabidopsis thaliana (Mouse-ear cress) protein is Bidirectional sugar transporter SWEET10.